A 125-amino-acid polypeptide reads, in one-letter code: MAPLKKGGEKKKGRSAINEVVTREYTINVHKRIHGISFKKRAPRAIKEIRKFAMKEMGTPDVRIDTRLNKAVWAKGVRNVPYRMRVRLSRKRNEDEDSPNKLYTLVTYVPVTTYKGLQTVNVDEN.

Belongs to the eukaryotic ribosomal protein eL31 family. In terms of assembly, component of the large ribosomal subunit.

Its subcellular location is the cytoplasm. Its function is as follows. Component of the large ribosomal subunit. The ribosome is a large ribonucleoprotein complex responsible for the synthesis of proteins in the cell. This Ictalurus punctatus (Channel catfish) protein is Large ribosomal subunit protein eL31 (rpl31).